A 294-amino-acid chain; its full sequence is Ribosomal protein L11 methyltransferase (294 aa).

The S-adenosyl-L-methionine site is built by T144, G165, D187, and N229.

This sequence belongs to the methyltransferase superfamily. PrmA family.

Its subcellular location is the cytoplasm. The enzyme catalyses L-lysyl-[protein] + 3 S-adenosyl-L-methionine = N(6),N(6),N(6)-trimethyl-L-lysyl-[protein] + 3 S-adenosyl-L-homocysteine + 3 H(+). Functionally, methylates ribosomal protein L11. The chain is Ribosomal protein L11 methyltransferase from Pseudomonas aeruginosa (strain LESB58).